Here is a 1948-residue protein sequence, read N- to C-terminus: Receptor-type tyrosine-protein phosphatase S (1948 aa).

The signal sequence occupies residues methionine 1–alanine 29. Residues glutamate 30–glycine 1282 are Extracellular-facing. Ig-like C2-type domains lie at proline 33–threonine 123, proline 135–tyrosine 233, and proline 245–threonine 327. Intrachain disulfides connect cysteine 54/cysteine 107 and cysteine 156/cysteine 216. The tract at residues lysine 68–lysine 72 is important for binding to glycosaminoglycan chains. Asparagine 263 and asparagine 308 each carry an N-linked (GlcNAc...) asparagine glycan. A disulfide bond links cysteine 266 and cysteine 311. 8 Fibronectin type-III domains span residues alanine 334–glutamine 424, alanine 429–glycine 523, glutamine 527–serine 616, proline 621–aspartate 718, proline 723–alanine 831, valine 832–glycine 930, histidine 931–aspartate 1033, and serine 1036–asparagine 1120. Residues threonine 700–proline 724 are disordered. Positions glutamate 701 to valine 713 are enriched in low complexity. Residue asparagine 733 is glycosylated (N-linked (GlcNAc...) asparagine). The N-linked (GlcNAc...) asparagine glycan is linked to asparagine 940. The helical transmembrane segment at leucine 1283–isoleucine 1303 threads the bilayer. At leucine 1304–threonine 1948 the chain is on the cytoplasmic side. Composition is skewed to basic and acidic residues over residues aspartate 1311 to threonine 1321 and alanine 1331 to glutamate 1340. Positions aspartate 1311–glutamate 1340 are disordered. 2 Tyrosine-protein phosphatase domains span residues leucine 1393–alanine 1648 and methionine 1680–tyrosine 1939. Substrate contacts are provided by residues aspartate 1557, cysteine 1589–arginine 1595, and glutamine 1633. The Phosphocysteine intermediate role is filled by cysteine 1589. Catalysis depends on cysteine 1880, which acts as the Phosphocysteine intermediate.

The protein belongs to the protein-tyrosine phosphatase family. Receptor class 2A subfamily. As to quaternary structure, binding to large heparan sulfate proteoglycan structures promotes oligomerization. Binding to chondroitin sulfate proteoglycan does not lead to oligomerization. Interacts (via Ig-like domains) with NTRK3. Interacts (via Ig-like domains) with NTRK1, but does not form detectable complexes with NTRK2. Interacts with PPFIA1, PPFIA2 and PPFIA3. Post-translationally, a cleavage occurs, separating the extracellular domain from the transmembrane segment. This process called 'ectodomain shedding' is thought to be involved in receptor desensitization, signal transduction and/or membrane localization. As to expression, detected in peripheral blood plasmacytoid dendritic cells (at protein level). Detected in all tissues tested except for placenta and liver. Detected in peripheral blood plasmacytoid dendritic cells.

It localises to the cell membrane. The protein resides in the cell projection. Its subcellular location is the axon. The protein localises to the perikaryon. It is found in the cytoplasmic vesicle. It localises to the secretory vesicle. The protein resides in the synaptic vesicle membrane. Its subcellular location is the synapse. The protein localises to the synaptosome. It is found in the postsynaptic density. It localises to the neuron projection. The protein resides in the growth cone. The catalysed reaction is O-phospho-L-tyrosyl-[protein] + H2O = L-tyrosyl-[protein] + phosphate. Cell surface receptor that binds to glycosaminoglycans, including chondroitin sulfate proteoglycans and heparan sulfate proteoglycan. Binding to chondroitin sulfate and heparan sulfate proteoglycans has opposite effects on PTPRS oligomerization and regulation of neurite outgrowth. Contributes to the inhibition of neurite and axonal outgrowth by chondroitin sulfate proteoglycans, also after nerve transection. Plays a role in stimulating neurite outgrowth in response to the heparan sulfate proteoglycan GPC2. Required for normal brain development, especially for normal development of the pituitary gland and the olfactory bulb. Functions as a tyrosine phosphatase. Mediates dephosphorylation of NTRK1, NTRK2 and NTRK3. Plays a role in down-regulation of signaling cascades that lead to the activation of Akt and MAP kinases. Down-regulates TLR9-mediated activation of NF-kappa-B, as well as production of TNF, interferon alpha and interferon beta. The sequence is that of Receptor-type tyrosine-protein phosphatase S (PTPRS) from Homo sapiens (Human).